The primary structure comprises 382 residues: Alanine racemase 1 (382 aa).

Residue Lys-39 is the Proton acceptor; specific for D-alanine of the active site. Lys-39 carries the post-translational modification N6-(pyridoxal phosphate)lysine. Residue Arg-138 coordinates substrate. The active-site Proton acceptor; specific for L-alanine is the Tyr-265. Position 312 (Met-312) interacts with substrate.

The protein belongs to the alanine racemase family. It depends on pyridoxal 5'-phosphate as a cofactor.

The catalysed reaction is L-alanine = D-alanine. It functions in the pathway amino-acid biosynthesis; D-alanine biosynthesis; D-alanine from L-alanine: step 1/1. Catalyzes the interconversion of L-alanine and D-alanine. May also act on other amino acids. The sequence is that of Alanine racemase 1 (alr1) from Staphylococcus aureus (strain N315).